A 327-amino-acid polypeptide reads, in one-letter code: Zinc transport protein ZntB (327 aa).

Residues 1 to 273 lie on the Cytoplasmic side of the membrane; that stretch reads MDAIKGSELQ…ARRTYTMSLM (273 aa). The helical transmembrane segment at 274–294 threads the bilayer; that stretch reads AMVFLPSTFLTGLFGVNLGGI. The Periplasmic portion of the chain corresponds to 295–300; the sequence is PGNSWH. A helical membrane pass occupies residues 301–321; it reads LGFSLFCLMLVVVIGGVAWWL. The Cytoplasmic portion of the chain corresponds to 322–327; sequence HRSKWL.

The protein belongs to the CorA metal ion transporter (MIT) (TC 1.A.35) family.

The protein resides in the cell inner membrane. The catalysed reaction is Zn(2+)(out) + H(+)(out) = Zn(2+)(in) + H(+)(in). Its function is as follows. Zinc transporter. Acts as a Zn(2+):proton symporter, which likely mediates zinc ion uptake. The sequence is that of Zinc transport protein ZntB from Klebsiella pneumoniae subsp. pneumoniae (strain ATCC 700721 / MGH 78578).